The chain runs to 212 residues: Ribonuclease HII (212 aa).

The 205-residue stretch at 1–205 (MTICGVDEAG…VQDILDRASQ (205 aa)) folds into the RNase H type-2 domain. A divalent metal cation-binding residues include Asp7, Glu8, and Asp100.

This sequence belongs to the RNase HII family. Mn(2+) is required as a cofactor. Requires Mg(2+) as cofactor.

Its subcellular location is the cytoplasm. It catalyses the reaction Endonucleolytic cleavage to 5'-phosphomonoester.. Endonuclease that specifically degrades the RNA of RNA-DNA hybrids. The polypeptide is Ribonuclease HII (Methanocorpusculum labreanum (strain ATCC 43576 / DSM 4855 / Z)).